The chain runs to 211 residues: MVRGKIEIKKIENVTSRQVTFSKRRSGLFKKAHELSVLCDAQVAAMIFSQKGRLYEFASSDIRNTIKRYAEYKREYFVAETHPIEQYVQGLKKEMVTMVKKIEVLEVHNRKMMGQSLDSCSVKELSEIATQIEKSLHMVRLRKAKLYEDELQKLKAKERELKDERVRLSLKKTIYTHLCQVGERPMGMPSGSKEKEDVETDLFIGFLKNRP.

In terms of domain architecture, MADS-box spans 1–61 (MVRGKIEIKK…GRLYEFASSD (61 aa)). The region spanning 88 to 187 (VQGLKKEMVT…LCQVGERPMG (100 aa)) is the K-box domain.

It localises to the nucleus. In terms of biological role, MADS-box transcription factor that acts with AGL42 and AGL71 in the control of flowering time. Promotes flowering at the shoot apical and axillary meristems. Seems to act through a gibberellin-dependent pathway. Interacts genetically with SOC1 and its expression is directly regulated by SOC1. The polypeptide is MADS-box protein AGL72 (AGL72) (Arabidopsis thaliana (Mouse-ear cress)).